Reading from the N-terminus, the 270-residue chain is Centromere protein Q (270 aa).

A disordered region spans residues 1 to 59; the sequence is MSGKANTSKKKSQRVKRNVKQRADKEDEELDSPENKVGNRAKRNRSHAGHLSSKEQTKC. 2 stretches are compositionally biased toward basic residues: residues 7-20 and 39-48; these read TSKK…RNVK and NRAKRNRSHA. A Phosphoserine modification is found at Ser-52. Residues 143-205 are a coiled coil; it reads LKVEREQERA…EEEMKEVFHI (63 aa).

It belongs to the CENP-Q/OKP1 family. As to quaternary structure, component of the CENPA-CAD complex, composed of CENPI, CENPK, CENPL, CENPO, CENPP, CENPQ, CENPR and CENPS. The CENPA-CAD complex interacts with the CENPA-NAC complex, at least composed of CENPA, CENPC, CENPH, CENPM, CENPN, CENPT and CENPU. Post-translationally, phosphorylation at Ser-52 is essential for CENPE recruitment to kinetochores and orderly chromosome congression.

Its subcellular location is the nucleus. The protein localises to the chromosome. It localises to the centromere. Its function is as follows. Component of the CENPA-CAD (nucleosome distal) complex, a complex recruited to centromeres which is involved in assembly of kinetochore proteins, mitotic progression and chromosome segregation. May be involved in incorporation of newly synthesized CENPA into centromeres via its interaction with the CENPA-NAC complex. Plays an important role in chromosome congression and in the recruitment of CENP-O complex (which comprises CENPO, CENPP, CENPQ and CENPU), CENPE and PLK1 to the kinetochores. This is Centromere protein Q (Cenpq) from Rattus norvegicus (Rat).